A 559-amino-acid polypeptide reads, in one-letter code: MEVIHAWSAPRSLSTTLMYSFAQRDDIEVLDEPLYAAFLKSTGVDRPYKDELLSKMECDGEKVVKDIIYGPGKKKYRFCKHISKQRLLGLPSELMSEGKHFILIRNPLNILPSFEKIHPSSFHELGLGELVSIYSDLCQMGTPPAIIDADELQRDPEATLRSLCDDLEIPFQASMLKWEAGPIPEDGLWAPWWYETLHKSTGFSSPQKYPQTFPLMHYDLLEQCLPLYNILRCHMKHKSSLLSSTLPPPSLPVPENAKLLAWVGDEIVPREMAKVSVFDSVVQGGDSVWEGLRIYKGKVFKLEEHLDRLSDSAKALAFNNVPTREEIKEAIFRTLITNGMFDNTHIRLSLTRGKKVTSGMSPAFNRYGCTLIVLAEWKPPVYDNDGGIVLVTATTRRNSPNNLDSKIHHNNLLNNILAKIESNNANVDDAIMLDKDGFVSETNATNIFMVKKDRVLTPHADYCLPGITRATVMELVVKENFILEERRISLSEFHTADEVWTTGTMGELSPVVKIDGRVIGEGKVGPVTRRLQNAYKKLTDGSGVPIPTYQEVKNLEPCV.

The protein belongs to the class-IV pyridoxal-phosphate-dependent aminotransferase family.

This is Branched-chain-amino-acid aminotransferase-like protein 2 from Arabidopsis thaliana (Mouse-ear cress).